The primary structure comprises 343 residues: Phospholipid phosphatase-related protein type 2 (343 aa).

The next 3 helical transmembrane spans lie at 12-32 (FSII…VILL), 69-89 (VPPA…ILLG), and 129-149 (FLGV…AGQV). N165 carries N-linked (GlcNAc...) asparagine glycosylation. Transmembrane regions (helical) follow at residues 210 to 230 (AALC…VFRV), 239 to 259 (SLCL…VAEY), and 266 to 286 (VLAG…CVVH). Residues 290 to 343 (SRPPSGRRLSPWEDLGQAPTMDSPLEKNPRSAGRIRHRHGSPHPSRRTAPAVAT) are disordered. Residues S299 and S312 each carry the phosphoserine modification. The span at 322–335 (GRIRHRHGSPHPSR) shows a compositional bias: basic residues.

The protein belongs to the PA-phosphatase related phosphoesterase family.

Its subcellular location is the membrane. The sequence is that of Phospholipid phosphatase-related protein type 2 from Homo sapiens (Human).